Reading from the N-terminus, the 600-residue chain is Aspartate--tRNA ligase (600 aa).

Residue Glu-175 coordinates L-aspartate. The segment at 199–202 (QLFK) is aspartate. Arg-221 contributes to the L-aspartate binding site. Residues 221 to 223 (RDE) and Gln-230 contribute to the ATP site. His-448 contributes to the L-aspartate binding site. Glu-484 is an ATP binding site. Arg-491 contacts L-aspartate. 536-539 (GLDR) provides a ligand contact to ATP.

Belongs to the class-II aminoacyl-tRNA synthetase family. Type 1 subfamily. As to quaternary structure, homodimer.

Its subcellular location is the cytoplasm. It catalyses the reaction tRNA(Asp) + L-aspartate + ATP = L-aspartyl-tRNA(Asp) + AMP + diphosphate. Functionally, catalyzes the attachment of L-aspartate to tRNA(Asp) in a two-step reaction: L-aspartate is first activated by ATP to form Asp-AMP and then transferred to the acceptor end of tRNA(Asp). This is Aspartate--tRNA ligase from Limosilactobacillus reuteri (strain DSM 20016) (Lactobacillus reuteri).